A 307-amino-acid polypeptide reads, in one-letter code: Serine/threonine-protein phosphatase 4 catalytic subunit (307 aa).

An N-acetylalanine modification is found at Ala-2. Mn(2+) is bound by residues Asp-54, His-56, Asp-82, and Asn-114. Catalysis depends on His-115, which acts as the Proton donor. Mn(2+) is bound by residues His-164 and His-238. Leucine methyl ester is present on Leu-307.

Belongs to the PPP phosphatase family. PP-4 (PP-X) subfamily. In terms of assembly, serine/threonine-protein phosphatase 4 (PP4) occurs in different assemblies of the catalytic and one or more regulatory subunits. Component of the PP4 complexes PPP4C-PPP4R1, PPP4C-PPP4R2, PPP4C-PPP4R2-PPP4R3A, PPP4C-PPP4R2-PPP4R3B and PPP4C-PPP4R4. The PPP4C-PPP4R2 complex appears to be a tetramer composed of 2 molecules of PPP4C and 2 molecules of PPP4R2. Interacts with REL, NFKB1/p50 and RELA. Interacts with SMN1 and GEMIN4. Interacts with IRS4 (phosphorylated). Interacts with SMEK1/PPP4R3A; the interaction requires PP4R2. Interacts with HDAC3. The cofactor is Mn(2+). Post-translationally, methylation at the C-terminal Leu-307 is critical for interactions with regulatory subunits and functions in DNA repair.

The protein localises to the cytoplasm. It localises to the nucleus. It is found in the cytoskeleton. Its subcellular location is the microtubule organizing center. The protein resides in the centrosome. The catalysed reaction is O-phospho-L-seryl-[protein] + H2O = L-seryl-[protein] + phosphate. It carries out the reaction O-phospho-L-threonyl-[protein] + H2O = L-threonyl-[protein] + phosphate. Its function is as follows. Protein phosphatase that is involved in many processes such as microtubule organization at centrosomes, maturation of spliceosomal snRNPs, apoptosis, DNA repair, tumor necrosis factor (TNF)-alpha signaling, activation of c-Jun N-terminal kinase MAPK8, regulation of histone acetylation, DNA damage checkpoint signaling, NF-kappa-B activation and cell migration. The PPP4C-PPP4R1 PP4 complex may play a role in dephosphorylation and regulation of HDAC3. The PPP4C-PPP4R2-PPP4R3A PP4 complex specifically dephosphorylates H2AX phosphorylated on Ser-140 (gamma-H2AX) generated during DNA replication and required for DNA DSB repair. Dephosphorylates NDEL1 at CDK1 phosphorylation sites and negatively regulates CDK1 activity in interphase. In response to DNA damage, catalyzes RPA2 dephosphorylation, an essential step for DNA repair since it allows the efficient RPA2-mediated recruitment of RAD51 to chromatin. The protein is Serine/threonine-protein phosphatase 4 catalytic subunit (PPP4C) of Oryctolagus cuniculus (Rabbit).